The sequence spans 481 residues: MKFHIGKDGEVKIILVYKNAEKVEEANDLYSYLKEKELFKGDLGEVYSHISHSEDKFILLGIGEKEKTTANSLRKAFFNAGKELMKFKVTSIKISIPMFKNLKYESIVQSITEGLLQSEYSFEKYLTKKKISPSIKNVYLDILEEKKEETINTINESKNLIEGIFLARNLVNEPAIYMTPTVLANNAKNQLESLGVEVKIYGKEKIKELGMEAFLAVSKGSFEESQLIVMNYKGNSNSDKKLALVGKGLTYDSGGYSIKPTSSMINMHSDMAGSASVIGAMKAIAMSKLEVNVVAIVAACENMISGGAYKPGDIISSMSGKTIEILNTDAEGRLTLADALWYAVDVVKADKIIDIATLTGACVTALGSINTGAITNNSYLMDNVKKASECAGEPVWEFPNNDEYKELIKGTFGDLKNSSGREAGAITAGMFLQEFVGNTPWVHLDVAGTAYLSSKNGYLQKGATGVPVKTLYYLAKGFKNK.

Positions 247 and 252 each coordinate Mn(2+). Residue lysine 259 is part of the active site. Mn(2+) contacts are provided by aspartate 270, aspartate 329, and glutamate 331. Arginine 333 is an active-site residue.

Belongs to the peptidase M17 family. The cofactor is Mn(2+).

Its subcellular location is the cytoplasm. It carries out the reaction Release of an N-terminal amino acid, Xaa-|-Yaa-, in which Xaa is preferably Leu, but may be other amino acids including Pro although not Arg or Lys, and Yaa may be Pro. Amino acid amides and methyl esters are also readily hydrolyzed, but rates on arylamides are exceedingly low.. The catalysed reaction is Release of an N-terminal amino acid, preferentially leucine, but not glutamic or aspartic acids.. In terms of biological role, presumably involved in the processing and regular turnover of intracellular proteins. Catalyzes the removal of unsubstituted N-terminal amino acids from various peptides. In Clostridium tetani (strain Massachusetts / E88), this protein is Probable cytosol aminopeptidase.